The chain runs to 326 residues: Vomeronasal type-1 receptor 94 (326 aa).

The Extracellular segment spans residues 1–32 (MSEILLFSPQPLFSYTMNKYSRLYTNSNIRNT). The helical transmembrane segment at 33 to 53 (FFSEIGIGIAANSLLLLFHIF) threads the bilayer. Topologically, residues 54-65 (KFIRGQRSRLTD) are cytoplasmic. A helical transmembrane segment spans residues 66 to 86 (LPIGLLSLIHLLKLLMIAFIA). Residues 87 to 110 (TDIFISWRGWDDIICKFLVYLYRS) are Extracellular-facing. A disulfide bridge links C101 with C188. A helical transmembrane segment spans residues 111-130 (FRGLSLCTTCMLSVLQAITL). The Cytoplasmic portion of the chain corresponds to 131–150 (SPRSSCLAKFKHKSPHHVSC). Residues 151 to 171 (AILSLSVLYMFISSHLLVSLI) form a helical membrane-spanning segment. Residues 172–203 (ATPNLTTNVFMYVSESCSILPMSYLMQSMFST) lie on the Extracellular side of the membrane. N175 carries N-linked (GlcNAc...) asparagine glycosylation. Residues 204–224 (LLAIRDVFLISLMVLSTCYMV) form a helical membrane-spanning segment. The Cytoplasmic segment spans residues 225–254 (ALLCRHRKQTRHLQGTSLSPKASPEKKATH). The chain crosses the membrane as a helical span at residues 255–275 (SILMLMSFFVLMSILDSIVSC). Topologically, residues 276–285 (SRTMFLYDPT) are extracellular. The helical transmembrane segment at 286–306 (SYAIQIFVSHIYATVSPFVFM) threads the bilayer. The Cytoplasmic portion of the chain corresponds to 307–326 (SNEKHIVNFLRSLCKRVINV).

This sequence belongs to the G-protein coupled receptor 1 family.

Its subcellular location is the cell membrane. Functionally, putative pheromone receptor implicated in the regulation of social as well as reproductive behavior. The polypeptide is Vomeronasal type-1 receptor 94 (Vom1r94) (Rattus norvegicus (Rat)).